A 333-amino-acid polypeptide reads, in one-letter code: Ketol-acid reductoisomerase (NADP(+)) (333 aa).

One can recognise a KARI N-terminal Rossmann domain in the interval 6 to 186; the sequence is TRVYTECDAD…GALRAGAIQT (181 aa). Residues 29–32, lysine 52, serine 55, serine 57, and 87–90 contribute to the NADP(+) site; these read YGSQ and DPAQ. Histidine 112 is an active-site residue. Glycine 138 lines the NADP(+) pocket. The KARI C-terminal knotted domain maps to 187–332; it reads TFTEETETDL…ARLRALFSWS (146 aa). Mg(2+) contacts are provided by aspartate 195, glutamate 199, glutamate 231, and glutamate 235. Residue serine 256 coordinates substrate.

It belongs to the ketol-acid reductoisomerase family. It depends on Mg(2+) as a cofactor.

The catalysed reaction is (2R)-2,3-dihydroxy-3-methylbutanoate + NADP(+) = (2S)-2-acetolactate + NADPH + H(+). It carries out the reaction (2R,3R)-2,3-dihydroxy-3-methylpentanoate + NADP(+) = (S)-2-ethyl-2-hydroxy-3-oxobutanoate + NADPH + H(+). Its pathway is amino-acid biosynthesis; L-isoleucine biosynthesis; L-isoleucine from 2-oxobutanoate: step 2/4. It functions in the pathway amino-acid biosynthesis; L-valine biosynthesis; L-valine from pyruvate: step 2/4. Functionally, involved in the biosynthesis of branched-chain amino acids (BCAA). Catalyzes an alkyl-migration followed by a ketol-acid reduction of (S)-2-acetolactate (S2AL) to yield (R)-2,3-dihydroxy-isovalerate. In the isomerase reaction, S2AL is rearranged via a Mg-dependent methyl migration to produce 3-hydroxy-3-methyl-2-ketobutyrate (HMKB). In the reductase reaction, this 2-ketoacid undergoes a metal-dependent reduction by NADPH to yield (R)-2,3-dihydroxy-isovalerate. The chain is Ketol-acid reductoisomerase (NADP(+)) from Tropheryma whipplei (strain TW08/27) (Whipple's bacillus).